A 162-amino-acid polypeptide reads, in one-letter code: Ribosome maturation factor RimM (162 aa).

The 72-residue stretch at 90–161 folds into the PRC barrel domain; that stretch reads EDCYYEADIV…KIIIKPLEVW (72 aa).

It belongs to the RimM family. As to quaternary structure, binds ribosomal protein uS19.

The protein localises to the cytoplasm. Its function is as follows. An accessory protein needed during the final step in the assembly of 30S ribosomal subunit, possibly for assembly of the head region. Essential for efficient processing of 16S rRNA. May be needed both before and after RbfA during the maturation of 16S rRNA. It has affinity for free ribosomal 30S subunits but not for 70S ribosomes. The sequence is that of Ribosome maturation factor RimM from Clostridium novyi (strain NT).